Reading from the N-terminus, the 499-residue chain is CD-NTase-associated protein 4 (499 aa).

An N-terminal endonuclease domain region spans residues 1-226 (MATSVLANWH…DFRFDGAARA (226 aa)). Active-site residues include Asp-49 and Gln-72. A Mg(2+)-binding site is contributed by Asp-49. A Mg(2+)-binding site is contributed by Ile-73. Lys-74 is an active-site residue. The tract at residues 258–464 (FRNVALRSFS…HIFSAAPNAV (207 aa)) is C-terminal SAVED domain.

Belongs to the Cap4 nuclease family. A monomer in the absence of ligand, in its presence it forms oligomers. Mg(2+) is required as a cofactor.

DNase activity is activated upon ligand binding (cAAG). Inhibited by EDTA. Its function is as follows. Effector DNase of a CBASS antivirus system. CBASS (cyclic oligonucleotide-based antiphage signaling system) provides immunity against bacteriophages. The CD-NTase protein (CdnD) synthesizes cyclic nucleotides in response to infection; these serve as specific second messenger signals. The signals activate a diverse range of effectors, leading to bacterial cell death and thus abortive phage infection. A type II-C(AAG) CBASS system. In terms of biological role, binds second messenger 3',3',3'-cyclic AMP-AMP-GMP (cAAG). In the presence of cAAG (synthesized by the cognate CD-NTase protein in the CBASS operon), endonucleolytically degrades dsDNA to approximately 17 bp length fragments, with a preference for 5'-C|NG sites. Only binds DNA in the presence of cAAG. Not activated by c-di-AMP, c-di-GMP, 3',3'-cyclic GMP-AMP (cGAMP) or the second messenger of A.baumanii strain ATCC 27244. Protects E.coli against phage T2 infection. When the cdnD-cap2-cap3-cap4 operon is introduced in E.coli there is a more than 10(3) decrease in the efficiency of T2 plaque formation. The operon does not protect against phage T5 and only about 10-fold against T7. Expression of cdnD-cap4 alone protects E.coli against phage T2 infection. This chain is CD-NTase-associated protein 4, found in Enterobacter hormaechei subsp. hoffmannii (strain UCI 50).